An 82-amino-acid chain; its full sequence is Large ribosomal subunit protein bL27 (82 aa).

The segment at M1–Y20 is disordered. The span at A7 to Q19 shows a compositional bias: polar residues.

This sequence belongs to the bacterial ribosomal protein bL27 family.

In Bifidobacterium longum (strain NCC 2705), this protein is Large ribosomal subunit protein bL27.